The following is a 428-amino-acid chain: Enolase (428 aa).

A (2R)-2-phosphoglycerate-binding site is contributed by Q164. The active-site Proton donor is E208. Residues D245, E286, and D313 each coordinate Mg(2+). 4 residues coordinate (2R)-2-phosphoglycerate: K338, R367, S368, and K389. The active-site Proton acceptor is K338.

This sequence belongs to the enolase family. The cofactor is Mg(2+).

Its subcellular location is the cytoplasm. It is found in the secreted. The protein resides in the cell surface. It catalyses the reaction (2R)-2-phosphoglycerate = phosphoenolpyruvate + H2O. It functions in the pathway carbohydrate degradation; glycolysis; pyruvate from D-glyceraldehyde 3-phosphate: step 4/5. Functionally, catalyzes the reversible conversion of 2-phosphoglycerate (2-PG) into phosphoenolpyruvate (PEP). It is essential for the degradation of carbohydrates via glycolysis. The sequence is that of Enolase from Pyrococcus abyssi (strain GE5 / Orsay).